The sequence spans 207 residues: Small ribosomal subunit protein uS4 (207 aa).

In terms of domain architecture, S4 RNA-binding spans 96-156 (RRLDNVVYRL…EKFKTSSFIA (61 aa)).

It belongs to the universal ribosomal protein uS4 family. In terms of assembly, part of the 30S ribosomal subunit. Contacts protein S5. The interaction surface between S4 and S5 is involved in control of translational fidelity.

One of the primary rRNA binding proteins, it binds directly to 16S rRNA where it nucleates assembly of the body of the 30S subunit. In terms of biological role, with S5 and S12 plays an important role in translational accuracy. This Leptospira interrogans serogroup Icterohaemorrhagiae serovar copenhageni (strain Fiocruz L1-130) protein is Small ribosomal subunit protein uS4.